The following is a 162-amino-acid chain: NADH-quinone oxidoreductase subunit I 2 (162 aa).

4Fe-4S ferredoxin-type domains lie at 52-82 (LRRYPNGEERCIACKLCEAICPAQAITIEAG) and 93-122 (VRYDIDMVKCIYCGLCQEACPVDAIVEGPN). [4Fe-4S] cluster-binding residues include Cys-62, Cys-65, Cys-68, Cys-72, Cys-102, Cys-105, Cys-108, and Cys-112.

This sequence belongs to the complex I 23 kDa subunit family. As to quaternary structure, NDH-1 is composed of 14 different subunits. Subunits NuoA, H, J, K, L, M, N constitute the membrane sector of the complex. It depends on [4Fe-4S] cluster as a cofactor.

The protein resides in the cell inner membrane. The enzyme catalyses a quinone + NADH + 5 H(+)(in) = a quinol + NAD(+) + 4 H(+)(out). Functionally, NDH-1 shuttles electrons from NADH, via FMN and iron-sulfur (Fe-S) centers, to quinones in the respiratory chain. The immediate electron acceptor for the enzyme in this species is believed to be ubiquinone. Couples the redox reaction to proton translocation (for every two electrons transferred, four hydrogen ions are translocated across the cytoplasmic membrane), and thus conserves the redox energy in a proton gradient. This chain is NADH-quinone oxidoreductase subunit I 2, found in Rhodopseudomonas palustris (strain HaA2).